The primary structure comprises 495 residues: Anaerobic nitric oxide reductase flavorubredoxin (495 aa).

A zinc metallo-hydrolase region spans residues 30–210 (HKGTSYNSYL…PFSPLVTAKI (181 aa)). Residues H79, E81, D83, H147, D166, and H227 each contribute to the Fe cation site. The Flavodoxin-like domain maps to 254–393 (ITLFYDSMSN…ECREHGRQLA (140 aa)). Residues 260–264 (SMSNN) and 342–369 (AFGS…DISI) contribute to the FMN site. One can recognise a Rubredoxin-like domain in the interval 438-489 (DQAMLCTVCQWVYDPAQGEPDQLVAPGTPWAQVPDSFLCPGCGIGKEVFEPC). C443, C446, C476, and C479 together coordinate Fe cation.

This sequence in the N-terminal section; belongs to the zinc metallo-hydrolase group 3 family. Homotetramer. It depends on Fe cation as a cofactor. FMN serves as cofactor.

It is found in the cytoplasm. It functions in the pathway nitrogen metabolism; nitric oxide reduction. Anaerobic nitric oxide reductase; uses NADH to detoxify nitric oxide (NO), protecting several 4Fe-4S NO-sensitive enzymes. Has at least 2 reductase partners, only one of which (NorW, flavorubredoxin reductase) has been identified. NO probably binds to the di-iron center; electrons enter from the NorW at rubredoxin and are transferred sequentially to the FMN center and the di-iron center. Also able to function as an aerobic oxygen reductase. This Aeromonas hydrophila subsp. hydrophila (strain ATCC 7966 / DSM 30187 / BCRC 13018 / CCUG 14551 / JCM 1027 / KCTC 2358 / NCIMB 9240 / NCTC 8049) protein is Anaerobic nitric oxide reductase flavorubredoxin.